The primary structure comprises 400 residues: Renin (400 aa).

A signal peptide spans 1 to 17; sequence MPLWGLLLALWGCSTFS. A propeptide spans 18-59 (activation peptide); the sequence is LPADTAAFRRIFLKKMPSVRESLKERGVDMAQLGAEWSQLTK. An N-linked (GlcNAc...) asparagine glycan is attached at asparagine 65. A Peptidase A1 domain is found at 80–397; sequence YYGEIGIGTP…DRRNNRIGFA (318 aa). Residue aspartate 98 is part of the active site. Cysteine 111 and cysteine 118 are oxidised to a cystine. Asparagine 135 carries N-linked (GlcNAc...) asparagine glycosylation. Cysteine 277 and cysteine 281 are joined by a disulfide. Aspartate 286 is a catalytic residue. The cysteines at positions 320 and 356 are disulfide-linked. N-linked (GlcNAc...) asparagine glycosylation is present at asparagine 353.

Belongs to the peptidase A1 family. As to quaternary structure, interacts with ATP6AP2. As to expression, kidney.

It localises to the secreted. Its subcellular location is the membrane. It carries out the reaction Cleavage of Leu-|-Xaa bond in angiotensinogen to generate angiotensin I.. Interaction with ATP6AP2 results in a 5-fold increased efficiency in angiotensinogen processing. In terms of biological role, renin is a highly specific endopeptidase, whose only known function is to generate angiotensin I from angiotensinogen in the plasma, initiating a cascade of reactions that produce an elevation of blood pressure and increased sodium retention by the kidney. This is Renin (REN) from Ovis aries (Sheep).